Reading from the N-terminus, the 207-residue chain is dITP/XTP pyrophosphatase (207 aa).

Substrate is bound at residue 7-12 (SNNAKK). Asp72 serves as the catalytic Proton acceptor. Asp72 is a Mg(2+) binding site. Residues Ser73, 155-158 (FGYD), Lys184, and 189-190 (HR) contribute to the substrate site.

The protein belongs to the HAM1 NTPase family. In terms of assembly, homodimer. Requires Mg(2+) as cofactor.

The enzyme catalyses XTP + H2O = XMP + diphosphate + H(+). It catalyses the reaction dITP + H2O = dIMP + diphosphate + H(+). The catalysed reaction is ITP + H2O = IMP + diphosphate + H(+). Functionally, pyrophosphatase that catalyzes the hydrolysis of nucleoside triphosphates to their monophosphate derivatives, with a high preference for the non-canonical purine nucleotides XTP (xanthosine triphosphate), dITP (deoxyinosine triphosphate) and ITP. Seems to function as a house-cleaning enzyme that removes non-canonical purine nucleotides from the nucleotide pool, thus preventing their incorporation into DNA/RNA and avoiding chromosomal lesions. This is dITP/XTP pyrophosphatase from Corynebacterium efficiens (strain DSM 44549 / YS-314 / AJ 12310 / JCM 11189 / NBRC 100395).